A 1382-amino-acid chain; its full sequence is DNA-directed RNA polymerase subunit beta'' (1382 aa).

Residues Cys224, Cys294, Cys301, and Cys304 each contribute to the Zn(2+) site.

Belongs to the RNA polymerase beta' chain family. RpoC2 subfamily. In plastids the minimal PEP RNA polymerase catalytic core is composed of four subunits: alpha, beta, beta', and beta''. When a (nuclear-encoded) sigma factor is associated with the core the holoenzyme is formed, which can initiate transcription. Zn(2+) serves as cofactor.

It localises to the plastid. The protein resides in the chloroplast. The enzyme catalyses RNA(n) + a ribonucleoside 5'-triphosphate = RNA(n+1) + diphosphate. In terms of biological role, DNA-dependent RNA polymerase catalyzes the transcription of DNA into RNA using the four ribonucleoside triphosphates as substrates. The polypeptide is DNA-directed RNA polymerase subunit beta'' (Dioscorea elephantipes (Elephant's foot yam)).